Consider the following 111-residue polypeptide: BET1-like protein (111 aa).

At 1–86 (MADWTRAQSS…VARSGRDTRK (86 aa)) the chain is on the cytoplasmic side. A phosphoserine mark is found at S9 and S37. A t-SNARE coiled-coil homology domain is found at 15–77 (EIVDRENKRM…TGSVKRFSTV (63 aa)). A helical; Anchor for type IV membrane protein transmembrane segment spans residues 87-107 (LLCGMAVVLIVAFFILSYLFS). The Vesicular portion of the chain corresponds to 108-111 (RTRT).

In terms of assembly, component of a SNARE complex consisting of STX5, YKT6, GOSR1 and BET1L. Interacts with STX5. In terms of tissue distribution, widely expressed. Highest levels in heart, liver, skeletal muscle and kidney.

Its subcellular location is the golgi apparatus membrane. It localises to the golgi apparatus. The protein localises to the trans-Golgi network membrane. Vesicle SNARE required for targeting and fusion of retrograde transport vesicles with the Golgi complex. Required for the integrity of the Golgi complex. This chain is BET1-like protein, found in Rattus norvegicus (Rat).